Reading from the N-terminus, the 429-residue chain is Glucose-6-phosphate isomerase (429 aa).

Catalysis depends on E282, which acts as the Proton donor. Residues H303 and K418 contribute to the active site.

Belongs to the GPI family.

It is found in the cytoplasm. The catalysed reaction is alpha-D-glucose 6-phosphate = beta-D-fructose 6-phosphate. The protein operates within carbohydrate biosynthesis; gluconeogenesis. It participates in carbohydrate degradation; glycolysis; D-glyceraldehyde 3-phosphate and glycerone phosphate from D-glucose: step 2/4. In terms of biological role, catalyzes the reversible isomerization of glucose-6-phosphate to fructose-6-phosphate. The sequence is that of Glucose-6-phosphate isomerase from Mesomycoplasma hyopneumoniae (strain 7448) (Mycoplasma hyopneumoniae).